A 58-amino-acid chain; its full sequence is Microcin J25 (58 aa).

A propeptide spanning residues 1–37 is cleaved from the precursor; that stretch reads MIKHFHFNKLSSGKKNNVPSPAKGVIQIKKSASQLTK. Positions 38–45 form a cross-link, isoglutamyl glycine isopeptide (Gly-Glu); the sequence is GGAGHVPE.

Its subcellular location is the secreted. In terms of biological role, peptide antibiotic that functions through inhibition of the bacterial DNA-dependent RNA polymerase (RNAP). Inhibits transcription by binding deep within RNAP secondary channel, where it sterically blocks the folding of the trigger loop, which is essential for efficient catalysis. In addition, it also seems to restrict access of nucleotide substrates to the catalytic center, and shows a partially competitive mode of inhibition with them. Exhibits potent bacteriocidal activity against a range of Enterobacteriaceae, including several pathogenic E.coli, Salmonella and Shigella strains. Also acts on the cytoplasmic membrane of Salmonella newport, producing alteration of membrane permeability and disruption of the subsequent gradient dissipation, which inhibits several processes essential for cell viability, such as oxygen consumption. Induces bacterial filamentation in susceptible cells in a non-SOS-dependent way, but this phenotype may result from impaired transcription of genes coding for cell division proteins. The sequence is that of Microcin J25 (mcjA) from Escherichia coli.